Consider the following 498-residue polypeptide: MTSSKNPTNDNSYFDAVLVGAGIMSSTLALLISEVLPDIKFLIIEKLKAPGSESTGAFNNAGTGHAANCELNYTPLDEKGNLKIDKALSINRSFERSMSLWASLYESGKIDIKKFLKFIPHISFVSGQDNISFLKKRFQKMTDNPEFIDMEFSTSFDEISSWAPLITKDRNPSTQIAATRIGRGTDINFEALTKEYLSLVSLNKNVEIRYKTELVDLKKIDKKQWELEISSEGRKTSIRTGYVFLGAGGKTINYLQKSKIPEAKSYGGFPVSGKWLICEKKDLTEKHNSKVYGKADIGSPPMSVPHLDTRWIDNKKLLLYGPFAGFTTKFLKQSSYFDLFSSIKKNNIFSMLDVGFKNNDLINYLISQSLKNHNSRVDNLKNMMPSANPSDWYLKNAGQRVQIIKKTEGGGSLKFGTEIVNSSDGSLSALLGASPGASTAVSIMVEVLEKSVLLLNDKHNLQKKINDLIYPELSDSENKSIYIKDIKKRNNSIFGFHP.

The protein belongs to the MQO family. FAD serves as cofactor.

It catalyses the reaction (S)-malate + a quinone = a quinol + oxaloacetate. It functions in the pathway carbohydrate metabolism; tricarboxylic acid cycle; oxaloacetate from (S)-malate (quinone route): step 1/1. The protein is Probable malate:quinone oxidoreductase of Prochlorococcus marinus (strain MIT 9312).